We begin with the raw amino-acid sequence, 446 residues long: Enolase (446 aa).

A Mg(2+)-binding site is contributed by serine 42. Serine 42 carries the post-translational modification Phosphoserine. The Pentapeptide insert signature appears at 104 to 108 (EWGWS). Lysine 133 bears the N6-acetyllysine mark. Residue lysine 138 forms a Glycyl lysine isopeptide (Lys-Gly) (interchain with G-Cter in ubiquitin) linkage. Tyrosine 139 carries the post-translational modification Phosphotyrosine. Histidine 166 and glutamate 175 together coordinate substrate. Glutamate 218 functions as the Proton donor in the catalytic mechanism. A Mg(2+)-binding site is contributed by aspartate 253. The short motif at 277–282 (DKSLVK) is the DKSLVK motif element. Mg(2+) contacts are provided by glutamate 304 and aspartate 331. Substrate-binding residues include glutamate 304 and aspartate 331. Threonine 339 carries the phosphothreonine modification. The Proton acceptor role is filled by lysine 356. The residue at position 375 (lysine 375) is an N6-acetyllysine. Substrate contacts are provided by residues 383 to 386 (SHRS) and lysine 407.

The protein belongs to the enolase family. In terms of assembly, homodimer. Forms a complex at least composed of DegP, ENO and HSP70. Interacts with G-actin. Interacts (via the DKSLVK motif) with mammalian host PLG/plasminogen (present in the mosquito blood meal); the interaction occurs at the ookinete cell surface and is required for ookinete invasion of the mosquito midgut. Interacts with A.gambiae EBP; depending on the Plasmodium species, the interaction is either involved in ookinete invasion of the mosquito midgut (P.berghei) or is dispensable (P.falciparum). Requires Mg(2+) as cofactor.

It is found in the cytoplasm. It localises to the nucleus. The protein resides in the cytoskeleton. Its subcellular location is the cell surface. The protein localises to the cell membrane. It is found in the vacuole. The enzyme catalyses (2R)-2-phosphoglycerate = phosphoenolpyruvate + H2O. Its pathway is carbohydrate degradation; glycolysis; pyruvate from D-glyceraldehyde 3-phosphate: step 4/5. Functionally, glycolytic enzyme that catalyzes the conversion of 2-phosphoglycerate to phosphoenolpyruvate. In addition to glycolysis, involved in various processes such as parasite development and invasion. Plays an essential role during ookinete invasion of the mosquito vector midgut by mediating the interaction of the ookinete with the midgut epithelium and, further, by binding to mammalian host plasminogen in the blood meal, whose conversion to active plasmin promotes the invasion process. This is Enolase from Plasmodium falciparum (isolate FCR-3 / Gambia).